The primary structure comprises 521 residues: Membrane-bound transcription factor site-2 protease (521 aa).

At 1–3 the chain is on the cytoplasmic side; sequence MIP. Residues 4–24 traverse the membrane as a helical segment; that stretch reads VSLVVVVVGGWTVVYLTDLVL. Residues 25-74 lie on the Lumenal side of the membrane; the sequence is KSSVYFKHSYEDWLESNGLSISPFHIRWQTAVFNRAFYSWGRRKARMLYQ. The next 2 membrane-spanning stretches (helical) occupy residues 75-95 and 96-107; these read WFNFGMVFGVIAMFSSFFLLG and KTLMQTLAQMMA. Topologically, residues 108 to 146 are lumenal; it reads DSPSSYSSSSSSSSSSSSSSSSSSSSSSSSSLHNEQVLQ. The segment at 113 to 137 is disordered; sequence YSSSSSSSSSSSSSSSSSSSSSSSS. The chain crosses the membrane as a helical span at residues 147–171; sequence VVVPGINLPVNQLTYFFAAVLISGV. Zn(2+) is bound at residue H173. The active site involves E174. 3 consecutive transmembrane segments (helical) span residues 176-188, 189-211, and 231-253; these read GHGIAAIREQVRF, NGFGIFLFIIYPGAFVDLFTTHL, and FVLALLGILALVLLPVILLPFYY. Residue H177 coordinates Zn(2+). The Lumenal segment spans residues 254 to 448; sequence TGVGVLITEV…LPVVVETFVK (195 aa). N-linked (GlcNAc...) asparagine glycosylation occurs at N339. 2 helical membrane-spanning segments follow: residues 449–466 and 467–478; these read YLISLSGALAIVNAVPCF and ALDGQWILNSFL. At 479-494 the chain is on the lumenal side; that stretch reads DATLTSVIGDNDVKDL. The chain crosses the membrane as a helical span at residues 495 to 515; the sequence is IGFFILLGGSVLLAANVTLGL. The Cytoplasmic portion of the chain corresponds to 516-521; it reads WMVTAR.

This sequence belongs to the peptidase M50A family. Zn(2+) serves as cofactor.

Its subcellular location is the membrane. It is found in the cytoplasm. It localises to the golgi apparatus membrane. The enzyme catalyses Cleaves several transcription factors that are type-2 transmembrane proteins within membrane-spanning domains. Known substrates include sterol regulatory element-binding protein (SREBP) -1, SREBP-2 and forms of the transcriptional activator ATF6. SREBP-2 is cleaved at the site 477-DRSRILL-|-CVLTFLCLSFNPLTSLLQWGGA-505. The residues Asn-Pro, 11 residues distal to the site of cleavage in the membrane-spanning domain, are important for cleavage by S2P endopeptidase. Replacement of either of these residues does not prevent cleavage, but there is no cleavage if both of these residues are replaced.. Functionally, zinc metalloprotease that mediates intramembrane proteolysis of proteins such as ATF6, ATF6B, SREBF1/SREBP1 and SREBF2/SREBP2. Catalyzes the second step in the proteolytic activation of the sterol regulatory element-binding proteins (SREBPs) SREBF1/SREBP1 and SREBF2/SREBP2: cleaves SREBPs within the first transmembrane segment, thereby releasing the N-terminal segment with a portion of the transmembrane segment attached. Mature N-terminal SREBP fragments shuttle to the nucleus and activate gene transcription. Also mediates the second step in the proteolytic activation of the cyclic AMP-dependent transcription factor ATF-6 (ATF6 and ATF6B). Involved in intramembrane proteolysis during bone formation. In astrocytes and osteoblasts, upon DNA damage and ER stress, mediates the second step of the regulated intramembrane proteolytic activation of the transcription factor CREB3L1, leading to the inhibition of cell-cycle progression. This Pongo abelii (Sumatran orangutan) protein is Membrane-bound transcription factor site-2 protease (MBTPS2).